A 115-amino-acid chain; its full sequence is Large ribosomal subunit protein uL22c (115 aa).

Belongs to the universal ribosomal protein uL22 family. In terms of assembly, part of the 50S ribosomal subunit.

Its subcellular location is the plastid. The protein resides in the chloroplast. In terms of biological role, this protein binds specifically to 23S rRNA. Functionally, the globular domain of the protein is located near the polypeptide exit tunnel on the outside of the subunit, while an extended beta-hairpin is found that lines the wall of the exit tunnel in the center of the 70S ribosome. This Phaeodactylum tricornutum (strain CCAP 1055/1) protein is Large ribosomal subunit protein uL22c (rpl22).